The sequence spans 548 residues: C2H2-type transcription factor MSN2 (548 aa).

2 consecutive C2H2-type zinc fingers follow at residues 420 to 448 and 449 to 471; these read FKCE…QDKP and FECN…ARTH.

As to quaternary structure, interacts with HOG1/OSM1.

The protein localises to the nucleus. It is found in the cytoplasm. Transcription factor that acts as a key downstream transcription factor in the HOG1-MAPK pathway. Regulates the expression of a series of downstream genes and controls vegetative growth, conidiogenesis, cell wall integrity, stress response, mitochondrial morphology, and pathogenicity. Binds to a putative promoter region 1500 bp upstream of the start codons of the target genes MGG_07019, POX1 and DCI1. Binds to the AGGGG and CCCCT motif of the COS1 promoter region. Involved in fatty acid beta-oxidation by directly regulating the expression of the dienoyl-CoA isomerase DCI1, thereby facilitating invasive hyphal growth during the early infection stage. Targets also the 3-methylglutaconyl-CoA hydratase-encoding gene (AUH1) to control mitochondrial morphology and mitophagy, which are critical for the infectious growth of the pathogen. This chain is C2H2-type transcription factor MSN2, found in Pyricularia oryzae (strain 70-15 / ATCC MYA-4617 / FGSC 8958) (Rice blast fungus).